Here is a 98-residue protein sequence, read N- to C-terminus: Small ribosomal subunit protein bS20 (98 aa).

This sequence belongs to the bacterial ribosomal protein bS20 family.

Binds directly to 16S ribosomal RNA. The protein is Small ribosomal subunit protein bS20 of Prochlorococcus marinus (strain NATL1A).